The primary structure comprises 336 residues: Dihydroorotate dehydrogenase (quinone) (336 aa).

FMN-binding positions include 62–66 and Thr-86; that span reads AGLDK. Position 66 (Lys-66) interacts with substrate. 111–115 contacts substrate; sequence NRMGF. Positions 139 and 172 each coordinate FMN. Position 172 (Asn-172) interacts with substrate. Residue Ser-175 is the Nucleophile of the active site. Asn-177 serves as a coordination point for substrate. FMN is bound by residues Lys-217 and Thr-245. 246–247 provides a ligand contact to substrate; the sequence is NT. FMN is bound by residues Gly-268, Gly-297, and 318–319; that span reads YS.

Belongs to the dihydroorotate dehydrogenase family. Type 2 subfamily. In terms of assembly, monomer. The cofactor is FMN.

Its subcellular location is the cell membrane. The enzyme catalyses (S)-dihydroorotate + a quinone = orotate + a quinol. It participates in pyrimidine metabolism; UMP biosynthesis via de novo pathway; orotate from (S)-dihydroorotate (quinone route): step 1/1. In terms of biological role, catalyzes the conversion of dihydroorotate to orotate with quinone as electron acceptor. This chain is Dihydroorotate dehydrogenase (quinone), found in Shigella dysenteriae serotype 1 (strain Sd197).